Reading from the N-terminus, the 349-residue chain is 4-hydroxy-3-methylbut-2-en-1-yl diphosphate synthase (flavodoxin) (349 aa).

[4Fe-4S] cluster-binding residues include Cys264, Cys267, Cys299, and Glu306.

The protein belongs to the IspG family. The cofactor is [4Fe-4S] cluster.

It catalyses the reaction (2E)-4-hydroxy-3-methylbut-2-enyl diphosphate + oxidized [flavodoxin] + H2O + 2 H(+) = 2-C-methyl-D-erythritol 2,4-cyclic diphosphate + reduced [flavodoxin]. Its pathway is isoprenoid biosynthesis; isopentenyl diphosphate biosynthesis via DXP pathway; isopentenyl diphosphate from 1-deoxy-D-xylulose 5-phosphate: step 5/6. Converts 2C-methyl-D-erythritol 2,4-cyclodiphosphate (ME-2,4cPP) into 1-hydroxy-2-methyl-2-(E)-butenyl 4-diphosphate. The chain is 4-hydroxy-3-methylbut-2-en-1-yl diphosphate synthase (flavodoxin) from Clostridium perfringens (strain 13 / Type A).